A 207-amino-acid polypeptide reads, in one-letter code: Alpha/beta-tubulin-N-acetyltransferase 9 (207 aa).

An N-acetyltransferase domain is found at 35–180 (EELQRLTASE…QEVTLRLTVS (146 aa)).

This sequence belongs to the acetyltransferase family. GNAT subfamily.

It carries out the reaction N-terminal L-methionyl-[tubulin] + acetyl-CoA = N-terminal N(alpha)-acetyl-L-methionyl-[tubulin] + CoA + H(+). Its function is as follows. N-acetyltransferase that mediates the acetylation of the N-terminal residues of alpha- and beta-tubulin. In Homo sapiens (Human), this protein is Alpha/beta-tubulin-N-acetyltransferase 9 (NAT9).